We begin with the raw amino-acid sequence, 324 residues long: NADH-quinone oxidoreductase subunit H 2 (324 aa).

A run of 9 helical transmembrane segments spans residues 1-21 (MIGMALTAIISTMLIMVLLVV), 77-97 (ILAPMVAATPVLAGFGVVAFG), 109-129 (VMFLLGMMGLTVYGVVLGALA), 147-167 (LGYEAFLGLSLLGVVMIAGSL), 179-199 (VWFVLLQPFGAALFCIAGVAA), 214-234 (LVAGYLTEYTGMSFGLFFLGE), 238-258 (VLLVASLAVTLFFGGWLGPVW), 263-283 (LPGPIWFGLKVGVIALIFIWI), and 298-318 (FAWKIALPLALANLLLTGLIV).

This sequence belongs to the complex I subunit 1 family. In terms of assembly, NDH-1 is composed of 14 different subunits. Subunits NuoA, H, J, K, L, M, N constitute the membrane sector of the complex.

It localises to the cell inner membrane. It catalyses the reaction a quinone + NADH + 5 H(+)(in) = a quinol + NAD(+) + 4 H(+)(out). In terms of biological role, NDH-1 shuttles electrons from NADH, via FMN and iron-sulfur (Fe-S) centers, to quinones in the respiratory chain. The immediate electron acceptor for the enzyme in this species is believed to be ubiquinone. Couples the redox reaction to proton translocation (for every two electrons transferred, four hydrogen ions are translocated across the cytoplasmic membrane), and thus conserves the redox energy in a proton gradient. This subunit may bind ubiquinone. The polypeptide is NADH-quinone oxidoreductase subunit H 2 (Rhodopseudomonas palustris (strain BisB18)).